Here is a 106-residue protein sequence, read N- to C-terminus: Small ribosomal subunit protein uS10 (106 aa).

This sequence belongs to the universal ribosomal protein uS10 family. As to quaternary structure, part of the 30S ribosomal subunit.

Involved in the binding of tRNA to the ribosomes. This Synechococcus sp. (strain WH7803) protein is Small ribosomal subunit protein uS10.